The following is a 121-amino-acid chain: Small ribosomal subunit protein uS13 (121 aa).

Positions 92-121 (RRGLPVRGQKTKNNSRTRKGPRKTMANKKK) are disordered.

Belongs to the universal ribosomal protein uS13 family. As to quaternary structure, part of the 30S ribosomal subunit. Forms a loose heterodimer with protein S19. Forms two bridges to the 50S subunit in the 70S ribosome.

In terms of biological role, located at the top of the head of the 30S subunit, it contacts several helices of the 16S rRNA. In the 70S ribosome it contacts the 23S rRNA (bridge B1a) and protein L5 of the 50S subunit (bridge B1b), connecting the 2 subunits; these bridges are implicated in subunit movement. Contacts the tRNAs in the A and P-sites. The sequence is that of Small ribosomal subunit protein uS13 from Oceanobacillus iheyensis (strain DSM 14371 / CIP 107618 / JCM 11309 / KCTC 3954 / HTE831).